A 229-amino-acid chain; its full sequence is Potassium/proton antiporter CemA (229 aa).

4 helical membrane-spanning segments follow: residues Phe-7–Phe-27, Ile-114–Leu-134, Ile-154–Ile-174, and Ile-189–Ile-209.

Belongs to the CemA family.

The protein resides in the plastid. It localises to the chloroplast inner membrane. The catalysed reaction is K(+)(in) + H(+)(out) = K(+)(out) + H(+)(in). Its function is as follows. Contributes to K(+)/H(+) antiport activity by supporting proton efflux to control proton extrusion and homeostasis in chloroplasts in a light-dependent manner to modulate photosynthesis. Prevents excessive induction of non-photochemical quenching (NPQ) under continuous-light conditions. Indirectly promotes efficient inorganic carbon uptake into chloroplasts. The protein is Potassium/proton antiporter CemA of Nandina domestica (Heavenly bamboo).